Here is a 360-residue protein sequence, read N- to C-terminus: Peptide chain release factor 1 (360 aa).

Position 235 is an N5-methylglutamine (glutamine 235).

Belongs to the prokaryotic/mitochondrial release factor family. Post-translationally, methylated by PrmC. Methylation increases the termination efficiency of RF1.

It is found in the cytoplasm. In terms of biological role, peptide chain release factor 1 directs the termination of translation in response to the peptide chain termination codons UAG and UAA. The chain is Peptide chain release factor 1 from Janthinobacterium sp. (strain Marseille) (Minibacterium massiliensis).